The primary structure comprises 315 residues: uncharacterized protein (315 aa).

This is an uncharacterized protein from Homo sapiens (Human).